The following is a 304-amino-acid chain: Glutaminase (304 aa).

Residues Ser63, Asn114, Glu158, Asn165, Tyr189, Tyr240, and Val258 each contribute to the substrate site.

This sequence belongs to the glutaminase family. As to quaternary structure, homotetramer.

The catalysed reaction is L-glutamine + H2O = L-glutamate + NH4(+). This is Glutaminase from Shewanella putrefaciens (strain CN-32 / ATCC BAA-453).